A 255-amino-acid polypeptide reads, in one-letter code: Cysteine protease avirulence protein AvrRpt2 (255 aa).

The tract at residues 1-50 (MKIAPVAINHSPLSREVPSHAAPTQAKQTNLQSEAGDLDARKSSASSPET) is disordered. A propeptide spans 1–71 (MKIAPVAINH…RHKIEVPAFG (71 aa)) (removed in mature form). Residues 70 to 71 (FG) are determinants of cleavage specificity. The interval 76-100 (KKSSKHETGGSSANADSSSVASDST) is disordered. Residues 86-98 (SSANADSSSVASD) are compositionally biased toward low complexity. C122 (nucleophile) is an active-site residue. Residues H208 and D226 contribute to the active site.

This sequence belongs to the peptidase C70 family. Interacts physically with plant cell ROC1 (Arabidopsis single-domain cyclophilin) and RIN4. Autocleaved inside plant cells upon activation by cyclophilin. Cleavage is crucial in subcellular location and in eliciting HR. Inhibited by cyclosporin A (cyclophilin inhibitor).

The protein localises to the secreted. The protein resides in the host cell membrane. In terms of biological role, effector protein involved in gene-for-gene resistance in plants expressing RPS2. Its thiol protease activity is required for the degradation of plant cell RIN4 and consequent activation of RPS2 during bacterial infection. The activation of RPS2 is sufficient for the induction of hypersensitive response (HR) and plant resistance. Cleavage of RIN4 by AvrRpt2 also interferes with RPM1-mediated resistance activated by either AvrRpm1 or AvrB. Contributes to virulence in plants lacking the resistance protein RPS2 promoting pathogen growth and disease symptoms. Inhibits PAMP (pathogen-associated molecular patterns)-induced signaling compromising the host's basal defense system. Blocks plant callose deposition, flg22 (a peptide corresponding to the most conserved domain of flagellin) induced accumulation of PR-1, PR-2 and PR-5 and activation of GST6 transcription. The mechanism of virulence is unknown, but this activity is independent of ethylene and salicylic acid response pathways and independent of RIN4 disappearance. The protein is Cysteine protease avirulence protein AvrRpt2 (avrRpt2) of Pseudomonas syringae pv. tomato.